Reading from the N-terminus, the 515-residue chain is Anterior pharynx in excess protein 1 (515 aa).

Positions 1–26 (MTNFSSLLTTIFLCIISSATGSGTIE) are cleaved as a signal peptide. The Extracellular segment spans residues 27–392 (LLISSPQTVL…QASDELQLRL (366 aa)). An N-linked (GlcNAc...) asparagine glycan is attached at N123. Residues 130 to 172 (NLCSSNYHGKRCNRYCIANAKLHWECSTHGVRRCSAGWSGEDC) form the DSL domain. 14 cysteine pairs are disulfide-bonded: C132-C141, C145-C155, C163-C172, C177-C187, C181-C193, C195-C204, C213-C218, C228-C237, C244-C256, C250-C268, C270-C279, C288-C300, C294-C310, and C312-C321. EGF-like domains follow at residues 173-205 (SNPI…TRCE), 203-238 (RCEQ…DRCD), 240-280 (DIKI…SQCK), and 284-322 (SKVR…KFCE). N200 is a glycosylation site (N-linked (GlcNAc...) asparagine). The region spanning 325-349 (NHGDCSAMRCSAGETCQISGDFAIC) is the EGF-like 5; incomplete domain. Residues 393 to 413 (IAAICVLFSVCVIGLALVSFF) form a helical membrane-spanning segment. Topologically, residues 414-515 (FYMHSFSKWK…AADDESSFRV (102 aa)) are cytoplasmic. Disordered regions lie at residues 427–452 (SQQA…SGTG) and 466–494 (RGNA…PPAY). Residues 431–452 (GGSTILPTTTSIPMSTTSSGTG) are compositionally biased toward low complexity.

Its subcellular location is the cell membrane. It is found in the nucleus. It localises to the cytoplasm. Functionally, probable ligand for lin-12/Notch and glp-1/Notch receptors and involved in the mediation of Notch signaling. Involved in the lin-12/Notch pathway signaling of cell fate in vulval precursor cells (VPCs), acting redundantly with dsl-1 and lag-2. Contributes to the establishment of the dorsal-ventral axis in early embryos. Involved in the specification of the blastomere cell ABp fate, probably acting as a signal from the P2 blastomere to the glp-1/Notch receptor on ABp and ABa. Probably acts as a signal, from the secondary vulval epithelial cells and the vulval muscle type 1 (vm1) cells, to activate the lin-12/Notch pathway in type 2 vulval muscle (vm2) cells, contributing to formation of the postsynaptic muscle plasma membrane extensions, known as muscle arms. Required for oocyte growth control, acting redundantly with lag-2, perhaps signaling via the glp-1/Notch pathway. Plays a somatic role in ovulation during adulthood, perhaps via lin-12/Notch signaling. Involved in establishing left-right asymmetry during intestinal organogenesis. The protein is Anterior pharynx in excess protein 1 (apx-1) of Caenorhabditis elegans.